Consider the following 629-residue polypeptide: MTDSFYGYDVIVIGAGHAGSEAALAAARTGAHTLLLTHNIETIGAMSCNPAIGGIGKGHLVKEIDALGGAMAHAADAAGIQWRTLNASKGPAVRATRCQADRALYRAAIRQMIEGQARLNIFQAEVDDLLFEGDTVCGAITHTGLHFKAPAVVLTAGTFLAGKIHIGPTQYAAGRMGDPPATMLAARLRERLFTVARLKTGTPPRIDGRTLNYTAMQEQPGDAPRPTMSFIGNSASHPPQVSCWITQTTERTHEIIRAALHRSPLYSGQIEGAGPRYCPSIEDKVVRFAEKNSHQIFVEPEGLNVIDIYPNGISTSLPFDVQLELVRSIRGFEQAHITRPGYAIEYDFFDPRGLKASLETKAIAGLFFAGQINGTTGYEEAAAQGLLAGLNAARHVRGLSSWTPRRDQAYLGVLVDDLITHGTNEPYRMFTSRAEYRLQLREDNADARLTAIGRDLGLIDDARWAHFNAKQEAVARECERLSAFWATPGNALGREVKETLGVTLSRETNIIDLMKRPELDYAALMRVPSLGPGVDDAQVAEQVEISVKYAGYLNRQSEEITRQQRHEATAIPLEFDYAAVRGLSTEVLQKLQHIQPQTVGQAQRIPGMTPAAISLLLVHLERMRRNRVA.

14-19 (GAGHAG) contacts FAD. 274–288 (GPRYCPSIEDKVVRF) is an NAD(+) binding site.

Belongs to the MnmG family. As to quaternary structure, homodimer. Heterotetramer of two MnmE and two MnmG subunits. FAD is required as a cofactor.

The protein localises to the cytoplasm. Its function is as follows. NAD-binding protein involved in the addition of a carboxymethylaminomethyl (cmnm) group at the wobble position (U34) of certain tRNAs, forming tRNA-cmnm(5)s(2)U34. The polypeptide is tRNA uridine 5-carboxymethylaminomethyl modification enzyme MnmG (Xylella fastidiosa (strain 9a5c)).